The sequence spans 110 residues: Nitrogenase-stabilizing/protective protein NifW (110 aa).

Belongs to the NifW family. Homotrimer; associates with NifD.

In terms of biological role, may protect the nitrogenase Fe-Mo protein from oxidative damage. The sequence is that of Nitrogenase-stabilizing/protective protein NifW from Acidithiobacillus ferrooxidans (strain ATCC 23270 / DSM 14882 / CIP 104768 / NCIMB 8455) (Ferrobacillus ferrooxidans (strain ATCC 23270)).